The following is a 308-amino-acid chain: MDWNGRDVISIRDFSKSDIEFVLKVAERLEEELREKGSLEYARGKILATLFFEPSTRTRLSFESAMHRLGGSVIGFSSASSTSVRKGESLADTIRTVEQYSDVIVIRHPMEGAARLAAEVAEVPVINAGDGSNQHPTQTLLDLYTIKRAFGKIDGLTIGLLGDLKYGRTVHSLAEALAFYDVELYLISPELLRMPKHIVEELRERGVKIHETTDLEGAIPELDVLYVTRIQRERFPDEEEYLKVKGSYQVNCKLLKNAKETLKVMHPLPRVDEIHPEVDKSEHALYFRQVFSGVPVRMALLGLTLGVL.

2 residues coordinate carbamoyl phosphate: arginine 57 and threonine 58. Position 86 (lysine 86) interacts with L-aspartate. Residues arginine 107, histidine 135, and glutamine 138 each coordinate carbamoyl phosphate. Residues arginine 168 and arginine 229 each coordinate L-aspartate. 2 residues coordinate carbamoyl phosphate: leucine 268 and proline 269.

The protein belongs to the aspartate/ornithine carbamoyltransferase superfamily. ATCase family. Heterooligomer of catalytic and regulatory chains.

The enzyme catalyses carbamoyl phosphate + L-aspartate = N-carbamoyl-L-aspartate + phosphate + H(+). It functions in the pathway pyrimidine metabolism; UMP biosynthesis via de novo pathway; (S)-dihydroorotate from bicarbonate: step 2/3. Catalyzes the condensation of carbamoyl phosphate and aspartate to form carbamoyl aspartate and inorganic phosphate, the committed step in the de novo pyrimidine nucleotide biosynthesis pathway. This is Aspartate carbamoyltransferase catalytic subunit from Thermococcus gammatolerans (strain DSM 15229 / JCM 11827 / EJ3).